We begin with the raw amino-acid sequence, 308 residues long: Reticulon-like protein 1 (308 aa).

Polar residues-rich tracts occupy residues methionine 1–alanine 17 and proline 41–isoleucine 66. Disordered regions lie at residues methionine 1–alanine 22 and proline 41–serine 92. An N-linked (GlcNAc...) asparagine glycan is attached at asparagine 65. Positions serine 67 to proline 81 are enriched in low complexity. N-linked (GlcNAc...) asparagine glycosylation is found at asparagine 113 and asparagine 135. In terms of domain architecture, Reticulon spans leucine 127 to lysine 308. The next 4 helical transmembrane spans lie at cysteine 138 to leucine 158, phenylalanine 166 to glycine 186, proline 233 to leucine 253, and tyrosine 255 to cysteine 275. Asparagine 303 is a glycosylation site (N-linked (GlcNAc...) asparagine).

Interacts with TTS1 and YOP1.

It localises to the endoplasmic reticulum membrane. It is found in the nucleus membrane. Its function is as follows. Required for the correct positioning of the cellular division plane by delimiting the actomyosin ring assembly at the cell equator. Overexpression causes cell lysis. This is Reticulon-like protein 1 (rtn1) from Schizosaccharomyces pombe (strain 972 / ATCC 24843) (Fission yeast).